Reading from the N-terminus, the 194-residue chain is MIFLPTVIDKNIKGDRFLDLYSKMLKERVIYLNGAIEDTMASLIVSQLMFLDSENSKDIILYINSPGGVVSSGLSIYDTIQFLKSDVSTICIGQAASMAAVLLAAGKKGKRFCFPNSRIMIHQPLGYAQGQASDVEIHAREMINIKQILCEILSSHTNNSIFQIFKDTDRDNFMNCKQTLKYGIIDNVLYKKWI.

The Nucleophile role is filled by serine 97. Histidine 122 is a catalytic residue.

This sequence belongs to the peptidase S14 family. Fourteen ClpP subunits assemble into 2 heptameric rings which stack back to back to give a disk-like structure with a central cavity, resembling the structure of eukaryotic proteasomes.

Its subcellular location is the cytoplasm. The catalysed reaction is Hydrolysis of proteins to small peptides in the presence of ATP and magnesium. alpha-casein is the usual test substrate. In the absence of ATP, only oligopeptides shorter than five residues are hydrolyzed (such as succinyl-Leu-Tyr-|-NHMec, and Leu-Tyr-Leu-|-Tyr-Trp, in which cleavage of the -Tyr-|-Leu- and -Tyr-|-Trp bonds also occurs).. In terms of biological role, cleaves peptides in various proteins in a process that requires ATP hydrolysis. Has a chymotrypsin-like activity. Plays a major role in the degradation of misfolded proteins. This chain is ATP-dependent Clp protease proteolytic subunit, found in Carsonella ruddii (strain PV).